The following is a 486-amino-acid chain: MAGAARDRAFLDHFGGAGADRPCHVEGALMNDMSRQATRLDAIGGRYDPWLLGAAVTLASLGVVMVASSSIELEASPFYYLTRHLLFLGGGIALAFWAMRTELKTIEQHNQMLLLACFVLLVVVFVPGLGSTVNGAKRWINLGVSRFQVVESVKVFYIIWLASYLVRFRDEVNATWQAMLKPVFVVGLLVGLLLLQPDFGSSMLLLSVTACMLVLGGAPIGRIILPILLLLPALVALVIFEPYRMRRVTSFMDPWVDQLGSGYQLSNALMAIGRGQWTGVGLGASVQKLNYLPESHTDFIFSVIAEELGFVGVCGVIGLYALLVGRAFWLGMRCVEMKRHFSGYIAFGIGLWIAMQSFVSIGVNLGILPTKGLTLPLISSGGSSVLMTCLAMGVLLRVSYEADRAERLRSKLSPQGAAISPGEPAEPVVDAVPPAYAPARKPQRDTAAAPAPAAAPVAAHVAPASAILRGTSRMQPRVEPTFGRIA.

At 1 to 50 the chain is on the cytoplasmic side; it reads MAGAARDRAFLDHFGGAGADRPCHVEGALMNDMSRQATRLDAIGGRYDPW. Residues 51–71 form a helical membrane-spanning segment; the sequence is LLGAAVTLASLGVVMVASSSI. Over 72 to 77 the chain is Periplasmic; the sequence is ELEASP. Residues 78–98 traverse the membrane as a helical segment; sequence FYYLTRHLLFLGGGIALAFWA. Over 99-112 the chain is Cytoplasmic; the sequence is MRTELKTIEQHNQM. The chain crosses the membrane as a helical span at residues 113–133; the sequence is LLLACFVLLVVVFVPGLGSTV. The Periplasmic portion of the chain corresponds to 134–141; sequence NGAKRWIN. Residues 142–162 traverse the membrane as a helical segment; it reads LGVSRFQVVESVKVFYIIWLA. Residues 163-174 are Cytoplasmic-facing; it reads SYLVRFRDEVNA. The helical transmembrane segment at 175-195 threads the bilayer; sequence TWQAMLKPVFVVGLLVGLLLL. Residues 196-199 lie on the Periplasmic side of the membrane; sequence QPDF. Residues 200-220 form a helical membrane-spanning segment; it reads GSSMLLLSVTACMLVLGGAPI. At 221–222 the chain is on the cytoplasmic side; sequence GR. The chain crosses the membrane as a helical span at residues 223–243; the sequence is IILPILLLLPALVALVIFEPY. The Periplasmic portion of the chain corresponds to 244-298; sequence RMRRVTSFMDPWVDQLGSGYQLSNALMAIGRGQWTGVGLGASVQKLNYLPESHTD. Residues 299-319 traverse the membrane as a helical segment; it reads FIFSVIAEELGFVGVCGVIGL. The Cytoplasmic portion of the chain corresponds to 320–342; that stretch reads YALLVGRAFWLGMRCVEMKRHFS. The chain crosses the membrane as a helical span at residues 343–363; sequence GYIAFGIGLWIAMQSFVSIGV. Residues 364 to 374 lie on the Periplasmic side of the membrane; the sequence is NLGILPTKGLT. Residues 375–395 traverse the membrane as a helical segment; sequence LPLISSGGSSVLMTCLAMGVL. At 396–486 the chain is on the cytoplasmic side; sequence LRVSYEADRA…RVEPTFGRIA (91 aa).

Belongs to the SEDS family. FtsW subfamily.

It is found in the cell inner membrane. The catalysed reaction is [GlcNAc-(1-&gt;4)-Mur2Ac(oyl-L-Ala-gamma-D-Glu-L-Lys-D-Ala-D-Ala)](n)-di-trans,octa-cis-undecaprenyl diphosphate + beta-D-GlcNAc-(1-&gt;4)-Mur2Ac(oyl-L-Ala-gamma-D-Glu-L-Lys-D-Ala-D-Ala)-di-trans,octa-cis-undecaprenyl diphosphate = [GlcNAc-(1-&gt;4)-Mur2Ac(oyl-L-Ala-gamma-D-Glu-L-Lys-D-Ala-D-Ala)](n+1)-di-trans,octa-cis-undecaprenyl diphosphate + di-trans,octa-cis-undecaprenyl diphosphate + H(+). The protein operates within cell wall biogenesis; peptidoglycan biosynthesis. In terms of biological role, peptidoglycan polymerase that is essential for cell division. The protein is Probable peptidoglycan glycosyltransferase FtsW of Xanthomonas oryzae pv. oryzae (strain KACC10331 / KXO85).